The following is a 53-amino-acid chain: Conotoxin Cal9.2f (53 aa).

The propeptide occupies 1 to 6 (KKGVTL). Cystine bridges form between cysteine 15–cysteine 32, cysteine 20–cysteine 42, and cysteine 22–cysteine 47.

In terms of tissue distribution, expressed by the venom duct.

The protein localises to the secreted. In terms of biological role, probable neurotoxin with unknown target. Possibly targets ion channels. This is Conotoxin Cal9.2f from Californiconus californicus (California cone).